A 232-amino-acid polypeptide reads, in one-letter code: Floral homeotic protein APETALA 3 (232 aa).

One can recognise an MADS-box domain in the interval 3-57 (RGKIQIKRIENQTNRQVTYSKRRNGLFKKAHELTVLCDARVSIIMFSSSNKLHEY). Positions 75–164 (SDVDVWATQY…KSQQDIQKNL (90 aa)) form a coiled coil. Positions 84–174 (YERMQETKRK…IHELELRAED (91 aa)) constitute a K-box domain.

Forms a heterodimer with PISTILLATA, capable of binding to CArG-box sequences. AP3/PI heterodimer binds AP1 or SEP3 to form complexes. In terms of tissue distribution, expressed in petals and stamens.

The protein localises to the nucleus. In terms of biological role, probable transcription factor involved in the genetic control of flower development. Is required for normal development of petals and stamens in the wild-type flower. Forms a heterodimer with PISTILLATA that is required for autoregulation of both AP3 and PI genes. AP3/PI heterodimer interacts with APETALA1 or SEPALLATA3 to form a ternary complex that could be responsible for the regulation of the genes involved in the flower development. AP3/PI heterodimer activates the expression of NAP. AP3/PI prevents GATA22/GNL and GATA21/GNC expression. The polypeptide is Floral homeotic protein APETALA 3 (AP3) (Arabidopsis thaliana (Mouse-ear cress)).